The following is a 248-amino-acid chain: Tyrosine recombinase XerD-like (248 aa).

In terms of domain architecture, Core-binding (CB) spans 1–72 (MKSYIEPFIA…TANQFLYYLY (72 aa)). The region spanning 85-248 (DTMKVMRTEK…PVTLEKYYKS (164 aa)) is the Tyr recombinase domain. Residues lysine 149 and arginine 213 contribute to the active site. The active-site O-(3'-phospho-DNA)-tyrosine intermediate is the tyrosine 245.

Belongs to the 'phage' integrase family. XerD-like subfamily.

It localises to the cytoplasm. In terms of biological role, putative tyrosine recombinase. Not involved in the cutting and rejoining of the recombining DNA molecules on dif(SL) site. The protein is Tyrosine recombinase XerD-like of Streptococcus pyogenes serotype M4 (strain MGAS10750).